A 236-amino-acid polypeptide reads, in one-letter code: Purine nucleoside phosphorylase DeoD-type (236 aa).

His5 lines the a purine D-ribonucleoside pocket. Phosphate is bound by residues Gly21, Arg25, Arg44, and 88 to 91; that span reads RVGT. Residues 180 to 182 and 204 to 205 contribute to the a purine D-ribonucleoside site; these read DME and SD. The active-site Proton donor is Asp205.

Belongs to the PNP/UDP phosphorylase family. Homohexamer; trimer of homodimers.

The enzyme catalyses a purine D-ribonucleoside + phosphate = a purine nucleobase + alpha-D-ribose 1-phosphate. It catalyses the reaction a purine 2'-deoxy-D-ribonucleoside + phosphate = a purine nucleobase + 2-deoxy-alpha-D-ribose 1-phosphate. Its function is as follows. Catalyzes the reversible phosphorolytic breakdown of the N-glycosidic bond in the beta-(deoxy)ribonucleoside molecules, with the formation of the corresponding free purine bases and pentose-1-phosphate. The chain is Purine nucleoside phosphorylase DeoD-type from Buchnera aphidicola subsp. Schizaphis graminum (strain Sg).